Consider the following 268-residue polypeptide: Putative hydro-lyase ABSDF2257 (268 aa).

Belongs to the D-glutamate cyclase family.

This chain is Putative hydro-lyase ABSDF2257, found in Acinetobacter baumannii (strain SDF).